The chain runs to 190 residues: Heme-binding protein 1 (190 aa).

Belongs to the HEBP family. In terms of assembly, monomer.

It localises to the cytoplasm. Functionally, may bind free porphyrinogens that may be present in the cell and thus facilitate removal of these potentially toxic compound. Binds with a high affinity to one molecule of heme or porphyrins. It binds metalloporphyrins, free porphyrins and N-methylprotoporphyrin with similar affinities. In Xenopus laevis (African clawed frog), this protein is Heme-binding protein 1 (hebp1).